Consider the following 581-residue polypeptide: Activating signal cointegrator 1 (581 aa).

At A2 the chain carries N-acetylalanine. The disordered stretch occupies residues 97–118 (KSGDHLKRGRKKGRNRQEVPAF). The C4-type zinc-finger motif lies at 171–187 (CDCLGQKHKLINNCLIC). Residues 200–300 (CLFCGTLVCT…ASDSNQWLSK (101 aa)) are mediates interaction with DDRGK1. S276 bears the Phosphoserine mark. Residue Y289 is modified to Phosphotyrosine. The interval 300–400 (KLERETLQKR…WVDHTGAASQ (101 aa)) is mediates interaction with UFL1. Residues K324, K325, and K334 each participate in a glycyl lysine isopeptide (Lys-Gly) (interchain with G-Cter in UFM1) cross-link. S341 is modified (phosphoserine). A Glycyl lysine isopeptide (Lys-Gly) (interchain with G-Cter in UFM1) cross-link involves residue K367. Positions 437 to 531 (LSVHQPWASL…FKEQFPDISQ (95 aa)) constitute an ASCH domain.

In terms of assembly, interacts with the thyroid hormone receptor/TR (via the ligand-binding domain); this interaction requires the presence of thyroid hormone. Interacts with the androgen receptor/AR; in an androgen, testosterone and dihydrotestosterone-dependent manner. Interacts with ESR1 (estrogen ligand-bound); competes with UFSP2. Interacts with UFSP2; competes with ligand-bound ESR1. Interacts with DDRGK1 and UFL1; the interaction with DDRGK1 is direct. Interacts with NCOA1. Interacts with EP300. Part of the ASC-1 complex, that contains TRIP4, ASCC1, ASCC2 and ASCC3. Identified in the RQT (ribosome quality control trigger) complex, that contains ASCC2, ASCC3 and TRIP4. Interacts with NEK6. Interacts with CSRP1. Interacts with ZCCHC4. Phosphorylated by NEK6. Post-translationally, polyufmylated by the UFM1-conjugating system composed of the enzymes UBA5, UFC1 and UFL1. Deufmylated by the protease UFSP2. Ufmylation of TRIP4 is promoted by ligand-bound nuclear receptors that compete with UFSP2 for interaction with TRIP4. Nuclear receptors-induced ufmylation promotes the recruitment of additional transcriptional coactivators like EP300 and NCOA1 and therefore the assembly of a coactivator complex facilitating nuclear receptor-mediated transcription.

It localises to the nucleus. It is found in the cytoplasm. The protein localises to the cytosol. The protein resides in the cytoskeleton. Its subcellular location is the microtubule organizing center. It localises to the centrosome. Transcription coactivator which associates with nuclear receptors, transcriptional coactivators including EP300, CREBBP and NCOA1, and basal transcription factors like TBP and TFIIA to facilitate nuclear receptors-mediated transcription. May thereby play an important role in establishing distinct coactivator complexes under different cellular conditions. Plays a role in thyroid hormone receptor and estrogen receptor transactivation. Also involved in androgen receptor transactivation. Plays a pivotal role in the transactivation of NF-kappa-B, SRF and AP1. Acts as a mediator of transrepression between nuclear receptor and either AP1 or NF-kappa-B. May play a role in the development of neuromuscular junction. May play a role in late myogenic differentiation. Also functions as part of the RQC trigger (RQT) complex that activates the ribosome quality control (RQC) pathway, a pathway that degrades nascent peptide chains during problematic translation. The chain is Activating signal cointegrator 1 from Homo sapiens (Human).